A 501-amino-acid polypeptide reads, in one-letter code: Sodium-coupled neutral amino acid symporter 2 (501 aa).

The segment at 1–26 (MSSAEMGKFDISPDEDSSSYSSNSND) is disordered. Residues 1 to 77 (MSSAEMGKFD…HPGTTSFGMS (77 aa)) lie on the Cytoplasmic side of the membrane. The interval 1–97 (MSSAEMGKFD…SGILGLSYAM (97 aa)) is regulates protein turnover upon amino acid deprivation. A helical membrane pass occupies residues 78 to 97 (VFNLSNAIVGSGILGLSYAM). Asparagine 83 serves as a coordination point for Na(+). Over 98-103 (ANTGIA) the chain is Extracellular. Residues 104-124 (LFVILLLVVSILSLYSVHLLL) form a helical membrane-spanning segment. Residues 125-159 (KTANEGGSLLYEQLGMKAFGMPGKLAASGSITMQN) are Cytoplasmic-facing. Residues 160–178 (IGAMSSYLFIVKYELPLVI) traverse the membrane as a helical segment. Residues 179 to 189 (KTFMNIEENAG) lie on the Extracellular side of the membrane. A helical membrane pass occupies residues 190–210 (HWYLNGDYLVLLVSVILILPL). The Cytoplasmic portion of the chain corresponds to 211–218 (SLLKNLGY). The chain crosses the membrane as a helical span at residues 219-239 (LGYTSGFSLLCMVFFLIVVIW). The Extracellular portion of the chain corresponds to 240-287 (KMFQIPCPMESDIINATLINATLAPFADENITISDACKPEYFIFNSQT). Cysteines 246 and 276 form a disulfide. Asparagine 254 and asparagine 259 each carry an N-linked (GlcNAc...) asparagine glycan. The helical transmembrane segment at 288–308 (VYAVPILTFSFVCHPAILPIY) threads the bilayer. Residues 309-324 (EELKSRSRKRMMNVSY) are Cytoplasmic-facing. A helical membrane pass occupies residues 325–345 (VSFFAMFLMYLLAALFGYLTF). Topologically, residues 346–366 (YGRVESELLHTYSAFLGADIL) are extracellular. A helical membrane pass occupies residues 367–387 (LLIVRLAVLMAVTLTVPVVIF). Threonine 381 provides a ligand contact to Na(+). Topologically, residues 388 to 408 (PIRSSVTQLLWAGKEFSWWRH) are cytoplasmic. The chain crosses the membrane as a helical span at residues 409–429 (CSITVVLLAFTNVLVIFVPTI). Topologically, residues 430–431 (RD) are extracellular. A helical transmembrane segment spans residues 432-452 (IFGFIGASAAAMLIFILPSAF). Over 453-467 (YIKLVKKEPMKSVQK) the chain is Cytoplasmic. A helical transmembrane segment spans residues 468-490 (IGAALFFLSGILVMTGCMTLIIL). Topologically, residues 491-501 (DWIHTDASDGH) are extracellular.

The protein belongs to the amino acid/polyamine transporter 2 family.

Its subcellular location is the cell membrane. The catalysed reaction is L-alanine(in) + Na(+)(in) = L-alanine(out) + Na(+)(out). The enzyme catalyses glycine(in) + Na(+)(in) = glycine(out) + Na(+)(out). It carries out the reaction L-serine(in) + Na(+)(in) = L-serine(out) + Na(+)(out). It catalyses the reaction L-proline(in) + Na(+)(in) = L-proline(out) + Na(+)(out). The catalysed reaction is L-methionine(in) + Na(+)(in) = L-methionine(out) + Na(+)(out). The enzyme catalyses L-histidine(in) + Na(+)(in) = L-histidine(out) + Na(+)(out). It carries out the reaction L-asparagine(in) + Na(+)(in) = L-asparagine(out) + Na(+)(out). It catalyses the reaction L-glutamine(in) + Na(+)(in) = L-glutamine(out) + Na(+)(out). The catalysed reaction is L-threonine(in) + Na(+)(in) = L-threonine(out) + Na(+)(out). The enzyme catalyses L-leucine(in) + Na(+)(in) = L-leucine(out) + Na(+)(out). It carries out the reaction L-phenylalanine(in) + Na(+)(in) = L-phenylalanine(out) + Na(+)(out). With respect to regulation, inhibited by N-methyl-D-glucamine. Inhibited by choline. Allosteric regulation of sodium ions binding by pH. Its function is as follows. Symporter that cotransports neutral amino acids and sodium ions from the extracellular to the intracellular side of the cell membrane. The transport is pH-sensitive, Li(+)-intolerant, electrogenic, driven by the Na(+) electrochemical gradient and cotransports of neutral amino acids and sodium ions with a stoichiometry of 1:1. In Gallus gallus (Chicken), this protein is Sodium-coupled neutral amino acid symporter 2.